Reading from the N-terminus, the 232-residue chain is Ubiquinone biosynthesis O-methyltransferase (232 aa).

Positions 36, 55, 76, and 120 each coordinate S-adenosyl-L-methionine.

The protein belongs to the methyltransferase superfamily. UbiG/COQ3 family.

It catalyses the reaction a 3-demethylubiquinol + S-adenosyl-L-methionine = a ubiquinol + S-adenosyl-L-homocysteine + H(+). The enzyme catalyses a 3-(all-trans-polyprenyl)benzene-1,2-diol + S-adenosyl-L-methionine = a 2-methoxy-6-(all-trans-polyprenyl)phenol + S-adenosyl-L-homocysteine + H(+). It participates in cofactor biosynthesis; ubiquinone biosynthesis. In terms of biological role, O-methyltransferase that catalyzes the 2 O-methylation steps in the ubiquinone biosynthetic pathway. The protein is Ubiquinone biosynthesis O-methyltransferase of Pseudomonas syringae pv. tomato (strain ATCC BAA-871 / DC3000).